A 343-amino-acid polypeptide reads, in one-letter code: Putative adenosine/adenine deaminase (343 aa).

Zn(2+) is bound by residues His-16, His-18, and His-204. His-18 contributes to the substrate binding site. The Proton donor role is filled by Glu-207. Asp-285 lines the Zn(2+) pocket. Asp-286 provides a ligand contact to substrate.

Belongs to the metallo-dependent hydrolases superfamily. Adenosine and AMP deaminases family. It depends on Zn(2+) as a cofactor.

Its function is as follows. Putative nucleoside deaminase. May catalyze the hydrolytic deamination of adenosine or some similar substrate and play a role in purine metabolism. The chain is Putative adenosine/adenine deaminase from Streptomyces coelicolor (strain ATCC BAA-471 / A3(2) / M145).